Here is a 432-residue protein sequence, read N- to C-terminus: Serine hydroxymethyltransferase 1 (432 aa).

(6S)-5,6,7,8-tetrahydrofolate-binding positions include L131 and 135 to 137 (GHL). K240 carries the N6-(pyridoxal phosphate)lysine modification.

Belongs to the SHMT family. As to quaternary structure, homodimer. Pyridoxal 5'-phosphate serves as cofactor.

Its subcellular location is the cytoplasm. It carries out the reaction (6R)-5,10-methylene-5,6,7,8-tetrahydrofolate + glycine + H2O = (6S)-5,6,7,8-tetrahydrofolate + L-serine. Its pathway is one-carbon metabolism; tetrahydrofolate interconversion. The protein operates within amino-acid biosynthesis; glycine biosynthesis; glycine from L-serine: step 1/1. Functionally, catalyzes the reversible interconversion of serine and glycine with tetrahydrofolate (THF) serving as the one-carbon carrier. This reaction serves as the major source of one-carbon groups required for the biosynthesis of purines, thymidylate, methionine, and other important biomolecules. Also exhibits THF-independent aldolase activity toward beta-hydroxyamino acids, producing glycine and aldehydes, via a retro-aldol mechanism. The polypeptide is Serine hydroxymethyltransferase 1 (Rhodopseudomonas palustris (strain ATCC BAA-98 / CGA009)).